A 248-amino-acid chain; its full sequence is Leucyl/phenylalanyl-tRNA--protein transferase (248 aa).

This sequence belongs to the L/F-transferase family.

Its subcellular location is the cytoplasm. The enzyme catalyses N-terminal L-lysyl-[protein] + L-leucyl-tRNA(Leu) = N-terminal L-leucyl-L-lysyl-[protein] + tRNA(Leu) + H(+). The catalysed reaction is N-terminal L-arginyl-[protein] + L-leucyl-tRNA(Leu) = N-terminal L-leucyl-L-arginyl-[protein] + tRNA(Leu) + H(+). It carries out the reaction L-phenylalanyl-tRNA(Phe) + an N-terminal L-alpha-aminoacyl-[protein] = an N-terminal L-phenylalanyl-L-alpha-aminoacyl-[protein] + tRNA(Phe). Functionally, functions in the N-end rule pathway of protein degradation where it conjugates Leu, Phe and, less efficiently, Met from aminoacyl-tRNAs to the N-termini of proteins containing an N-terminal arginine or lysine. The sequence is that of Leucyl/phenylalanyl-tRNA--protein transferase from Oleidesulfovibrio alaskensis (strain ATCC BAA-1058 / DSM 17464 / G20) (Desulfovibrio alaskensis).